The following is a 670-amino-acid chain: Probable Rho-GTPase-activating protein 9 (670 aa).

The F-BAR domain occupies 3–392 (DGFSNSFWSR…SFKNLDSLRD (390 aa)). Residues 141–161 (NSKKSNLTDRKPIPTSRKSNK) form a disordered region. In terms of domain architecture, Rho-GAP spans 425 to 622 (SSLTEDNLIV…DLINEFENLF (198 aa)). Thr-640 is modified (phosphothreonine). The segment covering 641–663 (PITTSPQKLKLPRSSSPCKNPSP) has biased composition (polar residues). The segment at 641–670 (PITTSPQKLKLPRSSSPCKNPSPTRRFRPF) is disordered. Residue Ser-645 is modified to Phosphoserine.

It localises to the cytoplasm. This is Probable Rho-GTPase-activating protein 9 (rga9) from Schizosaccharomyces pombe (strain 972 / ATCC 24843) (Fission yeast).